Here is a 461-residue protein sequence, read N- to C-terminus: Bifunctional protein GlmU (461 aa).

The interval 1-235 (MTDTRKQRAA…EDDLIGCDSK (235 aa)) is pyrophosphorylase. Residues 13-16 (LAAG), lysine 27, glutamine 80, 85-86 (GT), 108-110 (YGD), glycine 146, glutamate 161, and asparagine 176 contribute to the UDP-N-acetyl-alpha-D-glucosamine site. Aspartate 110 is a binding site for Mg(2+). Residues 236–256 (ADLAEAEAIFQQKRRRALMEA) are linker. An N-acetyltransferase region spans residues 257–461 (GVTMVAPETV…ARTTDQNKKG (205 aa)). Positions 322 and 340 each coordinate UDP-N-acetyl-alpha-D-glucosamine. The active-site Proton acceptor is the histidine 352. Residues tyrosine 355 and asparagine 366 each coordinate UDP-N-acetyl-alpha-D-glucosamine. Acetyl-CoA is bound by residues alanine 369, 375-376 (NY), serine 394, serine 412, and arginine 429.

The protein in the N-terminal section; belongs to the N-acetylglucosamine-1-phosphate uridyltransferase family. It in the C-terminal section; belongs to the transferase hexapeptide repeat family. As to quaternary structure, homotrimer. Requires Mg(2+) as cofactor.

The protein resides in the cytoplasm. The catalysed reaction is alpha-D-glucosamine 1-phosphate + acetyl-CoA = N-acetyl-alpha-D-glucosamine 1-phosphate + CoA + H(+). It catalyses the reaction N-acetyl-alpha-D-glucosamine 1-phosphate + UTP + H(+) = UDP-N-acetyl-alpha-D-glucosamine + diphosphate. It functions in the pathway nucleotide-sugar biosynthesis; UDP-N-acetyl-alpha-D-glucosamine biosynthesis; N-acetyl-alpha-D-glucosamine 1-phosphate from alpha-D-glucosamine 6-phosphate (route II): step 2/2. It participates in nucleotide-sugar biosynthesis; UDP-N-acetyl-alpha-D-glucosamine biosynthesis; UDP-N-acetyl-alpha-D-glucosamine from N-acetyl-alpha-D-glucosamine 1-phosphate: step 1/1. Its pathway is bacterial outer membrane biogenesis; LPS lipid A biosynthesis. Catalyzes the last two sequential reactions in the de novo biosynthetic pathway for UDP-N-acetylglucosamine (UDP-GlcNAc). The C-terminal domain catalyzes the transfer of acetyl group from acetyl coenzyme A to glucosamine-1-phosphate (GlcN-1-P) to produce N-acetylglucosamine-1-phosphate (GlcNAc-1-P), which is converted into UDP-GlcNAc by the transfer of uridine 5-monophosphate (from uridine 5-triphosphate), a reaction catalyzed by the N-terminal domain. In Hyphomonas neptunium (strain ATCC 15444), this protein is Bifunctional protein GlmU.